The chain runs to 156 residues: ATP synthase subunit b (156 aa).

A helical transmembrane segment spans residues 11-31 (AIAFVLFVLFCMKYVWPPIMA).

Belongs to the ATPase B chain family. As to quaternary structure, F-type ATPases have 2 components, F(1) - the catalytic core - and F(0) - the membrane proton channel. F(1) has five subunits: alpha(3), beta(3), gamma(1), delta(1), epsilon(1). F(0) has three main subunits: a(1), b(2) and c(10-14). The alpha and beta chains form an alternating ring which encloses part of the gamma chain. F(1) is attached to F(0) by a central stalk formed by the gamma and epsilon chains, while a peripheral stalk is formed by the delta and b chains.

It localises to the cell inner membrane. Functionally, f(1)F(0) ATP synthase produces ATP from ADP in the presence of a proton or sodium gradient. F-type ATPases consist of two structural domains, F(1) containing the extramembraneous catalytic core and F(0) containing the membrane proton channel, linked together by a central stalk and a peripheral stalk. During catalysis, ATP synthesis in the catalytic domain of F(1) is coupled via a rotary mechanism of the central stalk subunits to proton translocation. In terms of biological role, component of the F(0) channel, it forms part of the peripheral stalk, linking F(1) to F(0). In Proteus mirabilis (strain HI4320), this protein is ATP synthase subunit b.